A 277-amino-acid polypeptide reads, in one-letter code: Diaminopimelate epimerase (277 aa).

Substrate contacts are provided by Asn11 and Asn62. The Proton donor role is filled by Cys71. Residues 72-73 (GN), Asn160, Asn193, and 211-212 (ER) contribute to the substrate site. Cys220 serves as the catalytic Proton acceptor. 221–222 (GT) contributes to the substrate binding site.

This sequence belongs to the diaminopimelate epimerase family. In terms of assembly, homodimer.

The protein resides in the cytoplasm. The enzyme catalyses (2S,6S)-2,6-diaminopimelate = meso-2,6-diaminopimelate. The protein operates within amino-acid biosynthesis; L-lysine biosynthesis via DAP pathway; DL-2,6-diaminopimelate from LL-2,6-diaminopimelate: step 1/1. Catalyzes the stereoinversion of LL-2,6-diaminopimelate (L,L-DAP) to meso-diaminopimelate (meso-DAP), a precursor of L-lysine. This is Diaminopimelate epimerase from Methanococcus maripaludis (strain C6 / ATCC BAA-1332).